A 539-amino-acid chain; its full sequence is Carboxysome assembly protein CcmM (539 aa).

The carbonic anhydrase-like domain stretch occupies residues 1–214 (MPSPTTVPVA…PLRPSSSEAT (214 aa)). The tract at residues 194-213 (TADFHSTPTPSPLRPSSSEA) is disordered. Residues 226 to 397 (SSEVITQVRS…VLAELENCLS (172 aa)) form a RbcS-like repeat 1, SSUL1 repeat. 2 disulfide bridges follow: Cys-261–Cys-279 and Cys-377–Cys-395. The RbcS-like repeat 2, SSUL2 repeat unit spans residues 341–425 (LSAEVVNKVR…RVFEALIQDP (85 aa)). Positions 427–459 (GPVGSAKAAAAPVSSATPSSHSYTSNGSSSSDV) are disordered. Residues 431-457 (SAKAAAAPVSSATPSSHSYTSNGSSSS) show a composition bias toward low complexity. The stretch at 453 to 539 (GSSSSDVAGQ…RVAELLIQKP (87 aa)) is one RbcS-like repeat 3, SSUL3 repeat.

Belongs to the gamma-class carbonic anhydrase family. Probably a homotrimer. Purifies from carboxysomes in complex with both RuBisCO subunits and carbonic anhydrase (ccaA); the complex is probably associated with the carboxysome shell. Interacts with CcmN. Binds holo-RuBisCO (RbcL(8)-RbcS(8)) via its SSUL domains; the SSUL domain binds close to the equitorial domain of RuBisCO between RbcL dimers, with 1 M35 protein per dimer. As to quaternary structure, the short form purifies from carboxysomes in complex with both RuBisCO subunits; the complex is probably associated with the carboxysome shell. Post-translationally, identified as 2 proteins of 58 and 38 kDa by mass spectrometry, called M58 and M35, the shorter protein is translated starting at Val-216. Protease inhibitors do not alter the appearance of M35. In isolated carboxysomes M35 is 4-5 fold more abundant. The first amino acid (equivalent to Val-216) is not seen in Edman degradation, while Tyr-219 and Gln-222 may be post-translationally modified.

The protein localises to the carboxysome. Functionally, functions as a scaffold protein for the assembly of beta-carboxysomes, initiates carboxysome assembly by coalescing RuBisCO (ribulose bisphosphate carboxylase, rbcL-rbcS). Produced as a full-length (M58) and a shorter form (M35); both forms are required for correct carboxysome assembly and growth. The short form is more abundant. Despite its strong similarity to gamma-class carbonic anhydrase (CA) it does not have detectable CA activity. In terms of biological role, the M35 isoform is able to condense RuBisCO into a liquid matrix; the presence of disulfide bonds in M35 reduces affinity for RuBisCO, while mutating all 4 Cys to Ser causes a 4-fold increase in doubling time, more than 15% increase in CO(2) requirement, and abnormal carboxysomes. Beta-carboxysome assembly initiates when soluble RuBisCO is condensed into a liquid matrix in a pre-carboxysome by the RbcS-like domains of probably both CcmM58 and CcmM35. CcmN interacts with the N-terminus of CcmM58, and then recruits the CcmK2 major shell protein plus other less abundant CcmK proteins via CcmN's encapsulation peptide. Shell formation requires CcmK proteins and CcmO. CcmL caps the otherwise elongated carboxysome. Once fully encapsulated carboxysomes are formed, they migrate within the cell probably via interactions with the cytoskeleton. In Synechococcus elongatus (strain ATCC 33912 / PCC 7942 / FACHB-805) (Anacystis nidulans R2), this protein is Carboxysome assembly protein CcmM.